A 545-amino-acid polypeptide reads, in one-letter code: Probable zinc metalloprotease EGY2, chloroplastic (545 aa).

Residues 1–63 (MQLPAMSCSP…QIRNRRFVCQ (63 aa)) constitute a chloroplast transit peptide. Positions 66-142 (TETEPDGDGN…DATPASDAQE (77 aa)) are disordered. Over residues 68 to 85 (TEPDGDGNGDEEKEELGD) the composition is skewed to acidic residues. Polar residues-rich tracts occupy residues 88–109 (SSPS…TNAD) and 117–129 (NTEP…TVQN). 7 consecutive transmembrane segments (helical) span residues 256 to 276 (AVPE…TLLL), 300 to 320 (VYGA…HILA), 325 to 345 (GIKL…FGAI), 363 to 383 (AAGP…GFIL), 426 to 446 (PLVL…IPAG), 473 to 493 (LLGI…LIFF), and 513 to 533 (YISI…PYPF).

Belongs to the peptidase M50B family.

It is found in the plastid. Its subcellular location is the chloroplast membrane. Functionally, probable membrane-associated metalloprotease that may be involved in chloroplast development. In Oryza sativa subsp. indica (Rice), this protein is Probable zinc metalloprotease EGY2, chloroplastic (EGY2).